The chain runs to 106 residues: UPF0473 protein SSU98_0068 (106 aa).

It belongs to the UPF0473 family.

The protein is UPF0473 protein SSU98_0068 of Streptococcus suis (strain 98HAH33).